The chain runs to 380 residues: Phospho-N-acetylmuramoyl-pentapeptide-transferase (380 aa).

A run of 9 helical transmembrane segments spans residues 25–45, 70–90, 98–118, 142–162, 173–193, 209–229, 245–265, 272–294, and 357–377; these read RAAA…PAII, TTPT…VLLW, VLLA…DDYL, VLCG…TLPG, VLVV…VTFI, GLSS…AYVL, GAGE…GFLW, QVFM…AILL, and QVVV…LSTL.

Belongs to the glycosyltransferase 4 family. MraY subfamily. It depends on Mg(2+) as a cofactor.

The protein resides in the cell inner membrane. It carries out the reaction UDP-N-acetyl-alpha-D-muramoyl-L-alanyl-gamma-D-glutamyl-meso-2,6-diaminopimeloyl-D-alanyl-D-alanine + di-trans,octa-cis-undecaprenyl phosphate = di-trans,octa-cis-undecaprenyl diphospho-N-acetyl-alpha-D-muramoyl-L-alanyl-D-glutamyl-meso-2,6-diaminopimeloyl-D-alanyl-D-alanine + UMP. It participates in cell wall biogenesis; peptidoglycan biosynthesis. Catalyzes the initial step of the lipid cycle reactions in the biosynthesis of the cell wall peptidoglycan: transfers peptidoglycan precursor phospho-MurNAc-pentapeptide from UDP-MurNAc-pentapeptide onto the lipid carrier undecaprenyl phosphate, yielding undecaprenyl-pyrophosphoryl-MurNAc-pentapeptide, known as lipid I. This Gemmatimonas aurantiaca (strain DSM 14586 / JCM 11422 / NBRC 100505 / T-27) protein is Phospho-N-acetylmuramoyl-pentapeptide-transferase.